The primary structure comprises 445 residues: Putative transcription factor bHLH056 (445 aa).

Disordered regions lie at residues 36–70, 224–260, and 365–445; these read NQTH…PPHL, QIQP…AEMH, and PFPN…QPTA. The span at 231 to 246 shows a compositional bias: basic and acidic residues; sequence SKLKAREETHGTEEAR. The region spanning 255 to 304 is the bHLH domain; that stretch reads RTAEMHNLAERRRREKINEKMKTLQQLIPRCNKSTKVSTLDDAIEYVKSL. The span at 418 to 433 shows a compositional bias: low complexity; that stretch reads QGQTTSQLSSGQASSS.

As to quaternary structure, homodimer.

It localises to the nucleus. The sequence is that of Putative transcription factor bHLH056 (BHLH56) from Arabidopsis thaliana (Mouse-ear cress).